The following is an 81-amino-acid chain: Putative defensin-like protein 31 (81 aa).

The first 26 residues, 1–26, serve as a signal peptide directing secretion; it reads MTSSSKCLFFVFLCLAALLTPYLAEA. 3 cysteine pairs are disulfide-bonded: Cys38-Cys58, Cys44-Cys70, and Cys48-Cys72.

Belongs to the DEFL family.

It localises to the secreted. The sequence is that of Putative defensin-like protein 31 from Arabidopsis thaliana (Mouse-ear cress).